The following is a 267-amino-acid chain: Putative phosphoenolpyruvate synthase regulatory protein (267 aa).

Residue 147–154 (GVSRSGKT) coordinates ADP.

The protein belongs to the pyruvate, phosphate/water dikinase regulatory protein family. PSRP subfamily.

The catalysed reaction is [pyruvate, water dikinase] + ADP = [pyruvate, water dikinase]-phosphate + AMP + H(+). It catalyses the reaction [pyruvate, water dikinase]-phosphate + phosphate + H(+) = [pyruvate, water dikinase] + diphosphate. Its function is as follows. Bifunctional serine/threonine kinase and phosphorylase involved in the regulation of the phosphoenolpyruvate synthase (PEPS) by catalyzing its phosphorylation/dephosphorylation. In Cupriavidus necator (strain ATCC 17699 / DSM 428 / KCTC 22496 / NCIMB 10442 / H16 / Stanier 337) (Ralstonia eutropha), this protein is Putative phosphoenolpyruvate synthase regulatory protein.